Here is a 642-residue protein sequence, read N- to C-terminus: G protein-coupled receptor kinase 1 (642 aa).

The segment at 1-202 is N-terminal; it reads MEIENIVANT…LEKRPVDKHT (202 aa). In terms of domain architecture, RGS spans 52-188; sequence YAFVVEKQPI…AESMYFHRFL (137 aa). The 268-residue stretch at 203–470 folds into the Protein kinase domain; the sequence is FRLYRVLGKG…AEEIRAHPFF (268 aa). Residues 209–217 and Lys232 contribute to the ATP site; that span reads LGKGGFGEV. The active-site Proton acceptor is the Asp328. Residues 480–545 form the AGC-kinase C-terminal domain; the sequence is EPVPWKKMEA…GCVSIPWQSE (66 aa). The tract at residues 612–642 is disordered; sequence VEQQQPPKTSTQTPAVRSSRAASASGRTLVI. The span at 614-636 shows a compositional bias: low complexity; it reads QQQPPKTSTQTPAVRSSRAASAS.

The protein belongs to the protein kinase superfamily. AGC Ser/Thr protein kinase family. GPRK subfamily.

The catalysed reaction is [G-protein-coupled receptor] + ATP = [G-protein-coupled receptor]-phosphate + ADP + H(+). Its function is as follows. Specifically phosphorylates the activated forms of G protein-coupled receptors. This chain is G protein-coupled receptor kinase 1 (grk-1), found in Caenorhabditis elegans.